The sequence spans 331 residues: Biotin synthase (331 aa).

The Radical SAM core domain occupies Tyr-40–Arg-269. Residues Cys-55, Cys-59, and Cys-62 each coordinate [4Fe-4S] cluster. [2Fe-2S] cluster contacts are provided by Cys-100, Cys-132, Cys-192, and Arg-264.

This sequence belongs to the radical SAM superfamily. Biotin synthase family. In terms of assembly, homodimer. The cofactor is [4Fe-4S] cluster. It depends on [2Fe-2S] cluster as a cofactor.

It catalyses the reaction (4R,5S)-dethiobiotin + (sulfur carrier)-SH + 2 reduced [2Fe-2S]-[ferredoxin] + 2 S-adenosyl-L-methionine = (sulfur carrier)-H + biotin + 2 5'-deoxyadenosine + 2 L-methionine + 2 oxidized [2Fe-2S]-[ferredoxin]. The protein operates within cofactor biosynthesis; biotin biosynthesis; biotin from 7,8-diaminononanoate: step 2/2. Its function is as follows. Catalyzes the conversion of dethiobiotin (DTB) to biotin by the insertion of a sulfur atom into dethiobiotin via a radical-based mechanism. The sequence is that of Biotin synthase from Synechococcus sp. (strain CC9605).